A 131-amino-acid chain; its full sequence is Small ribosomal subunit protein uS8 (131 aa).

It belongs to the universal ribosomal protein uS8 family. Part of the 30S ribosomal subunit. Contacts proteins S5 and S12.

Functionally, one of the primary rRNA binding proteins, it binds directly to 16S rRNA central domain where it helps coordinate assembly of the platform of the 30S subunit. In Cupriavidus metallidurans (strain ATCC 43123 / DSM 2839 / NBRC 102507 / CH34) (Ralstonia metallidurans), this protein is Small ribosomal subunit protein uS8.